The following is a 140-amino-acid chain: MLMPKRVKHRKQMKGRMTGAACRRIEISYGEFALQATECGWVDSRQIEAARIAMTRYIKRGGKIWIRMFPDKPLTAKPAETRMGKGKGSPDSWVCVVKPGMVLYEMEGVTEEIAREAFRLAAHKLPISTKFITRGTQNEG.

It belongs to the universal ribosomal protein uL16 family. Part of the 50S ribosomal subunit.

Binds 23S rRNA and is also seen to make contacts with the A and possibly P site tRNAs. The sequence is that of Large ribosomal subunit protein uL16 from Trichlorobacter lovleyi (strain ATCC BAA-1151 / DSM 17278 / SZ) (Geobacter lovleyi).